The sequence spans 2360 residues: MGNQRNRVNLNPFRFWVFELREILREIKNYRYRYLGPFNSVGSFIHIFVHQERFLKLLDPRIWSVLRSQGSTGVVLFLVAVLIYRINNRNMIERKNIYLTGLLPIPTNFAGPRNETLEESFLSSNINRLIVSLLHLPKVKRLSESCFLDPKESTRVLPITKWRNWIGKRRDSSQLKGSSDQSRDHFDSIGTEDSEYHTLINQREIQQRKERSSLLDPSFLQTERTEIESDRFSKGLSGSSSKSRLFTEGEKEMNNHLPPEEIEEFLGNPTRSILSFFSDEWSELHLGSNPTERSTVDQKLLKKEQEVSFAPFRRSETKEIVNLFKTMAYLQKTVSIHPISSDPGCDMVPKDELDSEERFQEMADLFTLSITEPDLVYHKGFAFSIDSSVLDQKQFLAEARDESKKKSLLVLPPVFYQENESFYRRIRKRGVQISCGNDLEDPKPKIVVFASNNIVEAVNQYRWIRNLIQIQYSTHGYIRNVLNRFFLMNRSDRNFEYGIQRDQIGNDTLNHRTFMKYTINQHLSNLKKSQKKGSDPLILISRTERSVNRDPNAYRYKWSKGSKNFQEHLEHFVSEQKSRFQVVFDRYRSIRNRYRSRINQYSSDRSEVSDKKDNRYRSRINQYSSDRSEVSDKKNLAKFRSFVFSKLLLFLSNSLPFFFVSFGNTPPIQRSEIRVSELKGPNDRLCNQFLESIGLQLVYLKKLKPFLLDDHETSQKSKLLFNKKPEGMIDSFHTRNNRGKSLDSYFSMISHDQDNWLNPVKPFHRSSLISSFYKANRLRFLNNPHDFGFFCNKRFPFYVDIKNLDFTYGQFLNILFIRNTKFSLCGDKKKHAFLERDTISSIESQVSNLFKDFPQSGDERYNFYKYFHLAMRSDPLVRRAIYSIADISGTPLTEGQRVNFERTYCQPLSDMNLSDSEGKNLYQYLNFNSNMGLIYSEKCFSSEKRKKKKPEKRKKKKPEKRKEKKPEKRKEKKPEKRKEKKPEKRKEKKPEKRKEKKQSLYLKQWVEKVQMDRALQGERVSLILSNWNLFKTYVMPFSLTSTGYNLLKLMFLDTLGSYVMPLLRSSPKFVSICYAISDPCGISWRILQKKLCLLQWNWISAISNKCFHKLLLSEESIHRNNESPSMTDLRWPNLGEFLYSILFLLFVAGHLVFSHLLFFSQAFSELQRDFARAQSLMIPSYIVELRELLDMYPAPRSFKKLFLAAREKLVNYLRWGGERKSFLIHLFELLNITPNPIDRIAFLKNTRHLSHTSKELYSLITELGDFSSLCSGQRYRYDQIIENVNGPCCLIDDKIESWISNCDAIEDKEREFLVPFCNFTRETRIDQILLSLTHSDHLSNNDSASQMSEEPGAFYLRHLVDIHKKGLMNYECNTSCLAERRIFLAHYQTITYSPCGDNRSHFPSHGKTFSLRLPLHPSRATLVIGSIGSGRSYLVKSLATNSYVPLITVVLNKFLKNWTPQGFDIHESGVYDEYGDDAEEANDYGASFFDFLDNDSDDYEDRDSDDYEPGASDDYEPGDMEDFVDSEMTEWLTKTNVPLVYQLLDDEIDEFYITLQFELAKAMSPCILWIPNIHDLDAKESDYLSLGLLVNHLSRDCGRRSTKNEILVIASTHIPQKVDPSLIGPDGLSTCIKTRRLLVPQQQQCLFTLSYTRGFHLENKMFHTHTNEFESTILGPSVPDLVALTNEALSISITQKKSIIDTTTIRYALHRKTWDLEADRNLSPAKEHGTLFYQVGRAFAHTVLLRNCPIDPISIYIKKNLCEAGDSSLYKWYFELGTSMKKLTILLYLLTCSAGSIAQDLLSPPGPDEQNLITSYGLVENDSDLVHGLSDIVHGLLELEGALVGSSPTEEEVEGTEEEVEGTEDEEVEGTEEEVEGTEDEEGEGTEEEVEGTEDEEGEGTEEEVEGTEEEVEGTEDEEGEGTEDEEVEGTEEEVEGTEDEEGEGTEEEVEGTEEEVEGTEEEVEGTEEEVEGTEDEEVEGTEEEVEGTEDEEGEGTEYEEVEGTEDEEVEGTEKDSSQFDNDRVTLLLRPKPRNPLDIQRLIYQHQKYESELEEDDDDDEDVFAPQKMLEDLFSELVWSPRIWHPWDFILDCEAEIPAEEIPEEEDPLPEEALETEVAVWGEEEEGEADDEEDERLEAQQEDELLEEEDEELKEEEDELHEEEEEEEEEEEEEDELHEEEEEEEEEEEDELQENDSEFFRSETQQPQARDGFSEEEGCFRISQFMWVPGDPLSFLYKDTPFVEVLSYPEEATEISKELLRLLNPKTKRDAPKRARQRWWTKKKQDKHYELVLDRQRWLITKSSLSKSNGFFRSNTPSESYQYLSNLFLSNRRLLDQMTKTFFRKKWLFPDEMKIGFMEQ.

Disordered stretches follow at residues 172–193, 225–255, and 944–995; these read SSQLKGSSDQSRDHFDSIGTED, TEIESDRFSKGLSGSSSKSRLFTEGEKEMNN, and KRKK…KRKE. Over residues 234 to 244 the composition is skewed to low complexity; the sequence is KGLSGSSSKSR. The span at 245–254 shows a compositional bias: basic and acidic residues; it reads LFTEGEKEMN. The span at 944–959 shows a compositional bias: basic residues; the sequence is KRKKKKPEKRKKKKPE. The segment covering 960-993 has biased composition (basic and acidic residues); sequence KRKEKKPEKRKEKKPEKRKEKKPEKRKEKKPEKR. Residue 1425-1432 coordinates ATP; it reads GSIGSGRS. Disordered stretches follow at residues 1499-1518, 1843-2031, and 2098-2214; these read YEDRDSDDYEPGASDDYEPG, LVGS…LLRP, and PAEE…DGFS. Residues 1849–2011 show a composition bias toward acidic residues; that stretch reads TEEEVEGTEE…VEGTEDEEVE (163 aa). Positions 2012 to 2024 are enriched in basic and acidic residues; that stretch reads GTEKDSSQFDNDR. Composition is skewed to acidic residues over residues 2098-2115 and 2122-2197; these read PAEEIPEEEDPLPEEALE and GEEE…ENDS.

It belongs to the Ycf2 family.

The protein localises to the plastid. Its subcellular location is the chloroplast stroma. Its function is as follows. Probable ATPase of unknown function. Its presence in a non-photosynthetic plant (Epifagus virginiana) and experiments in tobacco indicate that it has an essential function which is probably not related to photosynthesis. This chain is Protein Ycf2, found in Oenothera argillicola (Appalachian evening primrose).